The following is a 399-amino-acid chain: Serine/threonine-protein kinase PknL (399 aa).

Topologically, residues 1–368 (MVEAGTRDPL…FIWARQHARR (368 aa)) are cytoplasmic. Residues 19–278 (YLVQAKIASG…IAMGADLEAI (260 aa)) enclose the Protein kinase domain. ATP is bound by residues 25-33 (IASGGTSTV) and lysine 48. Threonine 32 carries the post-translational modification Phosphothreonine; by autocatalysis. Residue threonine 62 is modified to Phosphothreonine; by autocatalysis. Aspartate 142 functions as the Proton acceptor in the catalytic mechanism. Phosphothreonine; by autocatalysis occurs at positions 173, 175, and 323. The tract at residues 312 to 346 (GQLGAKPVHHPTRQLTRQPGDCSEPASGSEPEHEP) is disordered. The helical transmembrane segment at 369–389 (MVLVWVSVVLAITGLVASAAW) threads the bilayer. At 390–399 (TIGSNLSGLL) the chain is on the extracellular side.

This sequence belongs to the protein kinase superfamily. Ser/Thr protein kinase family. Autophosphorylated. Thr-173 is required for autophosphorylation and transphosphorylation activities. Thr-175 is not necessary for autophosphorylation activity, but is required for full kinase activity.

The protein localises to the cell membrane. It catalyses the reaction L-seryl-[protein] + ATP = O-phospho-L-seryl-[protein] + ADP + H(+). It carries out the reaction L-threonyl-[protein] + ATP = O-phospho-L-threonyl-[protein] + ADP + H(+). In terms of biological role, phosphorylates the DNA-binding protein MT2231. May be involved in the regulation of cell division and cell envelope biosynthesis. This chain is Serine/threonine-protein kinase PknL (pknL), found in Mycobacterium tuberculosis (strain CDC 1551 / Oshkosh).